We begin with the raw amino-acid sequence, 623 residues long: uncharacterized protein (623 aa).

The stretch at 256 to 351 (AEEKLLSKNK…EEIHGLKKKN (96 aa)) forms a coiled coil. Disordered stretches follow at residues 417-485 (NRRN…SPSS) and 497-536 (ALSS…ECAT). The segment covering 422 to 431 (LESVPFNTLS) has biased composition (polar residues). The segment covering 452–481 (ELKKPAESYGDETKKPNQHNKDGSIDEKPK) has biased composition (basic and acidic residues).

This is an uncharacterized protein from Arabidopsis thaliana (Mouse-ear cress).